A 421-amino-acid chain; its full sequence is Serine--tRNA ligase (421 aa).

Thr-229 to Glu-231 provides a ligand contact to L-serine. Arg-260–Glu-262 is a binding site for ATP. Glu-283 is an L-serine binding site. An ATP-binding site is contributed by Glu-347 to Ser-350. Residue Ser-383 coordinates L-serine.

This sequence belongs to the class-II aminoacyl-tRNA synthetase family. Type-1 seryl-tRNA synthetase subfamily. In terms of assembly, homodimer. The tRNA molecule binds across the dimer.

It localises to the cytoplasm. It carries out the reaction tRNA(Ser) + L-serine + ATP = L-seryl-tRNA(Ser) + AMP + diphosphate + H(+). The enzyme catalyses tRNA(Sec) + L-serine + ATP = L-seryl-tRNA(Sec) + AMP + diphosphate + H(+). It participates in aminoacyl-tRNA biosynthesis; selenocysteinyl-tRNA(Sec) biosynthesis; L-seryl-tRNA(Sec) from L-serine and tRNA(Sec): step 1/1. Functionally, catalyzes the attachment of serine to tRNA(Ser). Is also able to aminoacylate tRNA(Sec) with serine, to form the misacylated tRNA L-seryl-tRNA(Sec), which will be further converted into selenocysteinyl-tRNA(Sec). This Desulfitobacterium hafniense (strain Y51) protein is Serine--tRNA ligase.